The primary structure comprises 180 residues: uncharacterized protein (180 aa).

Positions 35–163 constitute a Nudix hydrolase domain; the sequence is LRHRATYIVV…TPDSLKALAL (129 aa). The Nudix box signature appears at 72-94; it reads GGVVQADEQLLESARREAEEELG. Positions 88 and 92 each coordinate Mg(2+).

This sequence belongs to the Nudix hydrolase family. Mg(2+) serves as cofactor.

This is an uncharacterized protein from Shigella flexneri.